Here is a 313-residue protein sequence, read N- to C-terminus: Probable alpha-L-glutamate ligase (313 aa).

The ATP-grasp domain maps to 112-294 (LQMLMAQGIA…IALQMIVHLE (183 aa)). ATP-binding positions include Lys-148, 185–186 (EF), Asp-194, and 218–220 (RAN). The Mg(2+) site is built by Asp-255, Glu-267, and Asn-269. The Mn(2+) site is built by Asp-255, Glu-267, and Asn-269.

This sequence belongs to the RimK family. Mg(2+) is required as a cofactor. It depends on Mn(2+) as a cofactor.

The chain is Probable alpha-L-glutamate ligase from Pasteurella multocida (strain Pm70).